The sequence spans 199 residues: Recombination protein RecR (199 aa).

Residues 57–72 (CAECRTFTEEEVCHIC) form a C4-type zinc finger. In terms of domain architecture, Toprim spans 81-176 (GQICVVESPA…EASRIAHGVP (96 aa)).

It belongs to the RecR family.

May play a role in DNA repair. It seems to be involved in an RecBC-independent recombinational process of DNA repair. It may act with RecF and RecO. In Vibrio parahaemolyticus serotype O3:K6 (strain RIMD 2210633), this protein is Recombination protein RecR.